A 233-amino-acid polypeptide reads, in one-letter code: Histone H1-I (233 aa).

Disordered stretches follow at residues 1–55 and 115–233; these read MSDS…HPPV and TGAS…KKSK. A compositionally biased stretch (low complexity) spans 17-29; it reads KAASPAKSPAKSP. The H15 domain maps to 51 to 125; sequence THPPVSEMVV…GASGSFKMPP (75 aa). Basic and acidic residues-rich tracts occupy residues 128-137 and 146-155; these read KKVDRPESAP and TRVERKEKKV. Composition is skewed to basic residues over residues 172-213 and 223-233; these read AAKK…KPTP and AAARKPAKKSK.

The protein belongs to the histone H1/H5 family.

Its subcellular location is the nucleus. The protein resides in the chromosome. Its function is as follows. Histones H1 are necessary for the condensation of nucleosome chains into higher-order structures. In Glyptotendipes barbipes (Midge), this protein is Histone H1-I.